We begin with the raw amino-acid sequence, 144 residues long: Group IID secretory phospholipase A2 (144 aa).

An N-terminal signal peptide occupies residues 1 to 19; the sequence is MRLALLCGLLLAGITATQG. 7 disulfide bridges follow: cysteine 45–cysteine 137, cysteine 47–cysteine 63, cysteine 62–cysteine 117, cysteine 68–cysteine 144, cysteine 69–cysteine 110, cysteine 78–cysteine 103, and cysteine 96–cysteine 108. Ca(2+) is bound by residues histidine 46, glycine 48, and glycine 50. Residue histidine 66 is part of the active site. Aspartate 67 lines the Ca(2+) pocket. Asparagine 99 carries N-linked (GlcNAc...) asparagine glycosylation. Aspartate 111 is an active-site residue.

It belongs to the phospholipase A2 family. Ca(2+) is required as a cofactor. In terms of tissue distribution, highly expressed in secondary lymphoid tissues, spleen and lymph nodes. Expressed at a lesser extent in thymus. Expressed in CD4-positive, IL2RA/CD25-positive, FOXP3-positive Tregs (at protein level). Expressed in myeloid cell subsets resident in spleen and lymph nodes, ITGAX/CD11C-positive dendritic cells and macrophages (at protein level). Enriched in CD4-positive, ITGAM/CD11B-positive dendritic cell subset. Expressed in pulmonary ITGAX/CD11C-positive dendritic cell subset (at protein level).

The protein resides in the secreted. It localises to the cell membrane. It is found in the cytoplasm. It carries out the reaction a 1,2-diacyl-sn-glycero-3-phosphoethanolamine + H2O = a 1-acyl-sn-glycero-3-phosphoethanolamine + a fatty acid + H(+). The enzyme catalyses 1-hexadecanoyl-2-(9Z-octadecenoyl)-sn-glycero-3-phosphoethanolamine + H2O = 1-hexadecanoyl-sn-glycero-3-phosphoethanolamine + (9Z)-octadecenoate + H(+). It catalyses the reaction 1-hexadecanoyl-2-(9Z,12Z-octadecadienoyl)-sn-glycero-3-phosphoethanolamine + H2O = 1-hexadecanoyl-sn-glycero-3-phosphoethanolamine + (9Z,12Z)-octadecadienoate + H(+). The catalysed reaction is 1,2-dihexadecanoyl-sn-glycero-3-phospho-(1'-sn-glycerol) + H2O = 1-hexadecanoyl-sn-glycero-3-phospho-(1'-sn-glycerol) + hexadecanoate + H(+). It carries out the reaction 1-hexadecanoyl-2-(9Z-octadecenoyl)-sn-glycero-3-phospho-(1'-sn-glycerol) + H2O = 1-hexadecanoyl-sn-glycero-3-phospho-(1'-sn-glycerol) + (9Z)-octadecenoate + H(+). The enzyme catalyses a 1,2-diacyl-sn-glycero-3-phosphocholine + H2O = a 1-acyl-sn-glycero-3-phosphocholine + a fatty acid + H(+). It catalyses the reaction 1,2-dihexadecanoyl-sn-glycero-3-phosphocholine + H2O = 1-hexadecanoyl-sn-glycero-3-phosphocholine + hexadecanoate + H(+). The catalysed reaction is 1-hexadecanoyl-2-(9Z-octadecenoyl)-sn-glycero-3-phosphocholine + H2O = 1-hexadecanoyl-sn-glycero-3-phosphocholine + (9Z)-octadecenoate + H(+). It carries out the reaction 1-hexadecanoyl-2-(9Z,12Z-octadecadienoyl)-sn-glycero-3-phosphocholine + H2O = (9Z,12Z)-octadecadienoate + 1-hexadecanoyl-sn-glycero-3-phosphocholine + H(+). The enzyme catalyses 1-hexadecanoyl-2-(4Z,7Z,10Z,13Z,16Z,19Z-docosahexaenoyl)-sn-glycero-3-phosphocholine + H2O = (4Z,7Z,10Z,13Z,16Z,19Z)-docosahexaenoate + 1-hexadecanoyl-sn-glycero-3-phosphocholine + H(+). Its function is as follows. Secretory calcium-dependent phospholipase A2 that primarily targets extracellular lipids, exerting anti-inflammatory and immunosuppressive functions. Hydrolyzes the ester bond of the fatty acyl group attached at sn-2 position of phospholipids (phospholipase A2 activity) with preference for phosphatidylethanolamines and phosphatidylglycerols over phosphatidylcholines. In draining lymph nodes, selectively hydrolyzes diacyl and alkenyl forms of phosphatidylethanolamines, releasing omega-3 polyunsaturated fatty acids (PUFAs) such as eicosapentaenoate and docosahexaenoate that are precursors of the anti-inflammatory lipid mediators, resolvins. During the resolution phase of acute inflammation drives docosahexaenoate-derived resolvin D1 synthesis, which suppresses dendritic cell activation and T-helper 1 immune response. May act in an autocrine and paracrine manner. Via a mechanism independent of its catalytic activity, promotes differentiation of regulatory T cells (Tregs) and participates in the maintenance of immune tolerance. May contribute to lipid remodeling of cellular membranes and generation of lipid mediators involved in pathogen clearance. Displays bactericidal activity against Gram-positive bacteria by directly hydrolyzing phospholipids of the bacterial membrane. The sequence is that of Group IID secretory phospholipase A2 (Pla2g2d) from Mus musculus (Mouse).